The primary structure comprises 692 residues: Elongation factor G 2 (692 aa).

One can recognise a tr-type G domain in the interval 8 to 283 (EKTRNIGIMA…SVVAYLPSPL (276 aa)). GTP-binding positions include 17–24 (AHIDAGKT), 81–85 (DTPGH), and 135–138 (NKMD).

The protein belongs to the TRAFAC class translation factor GTPase superfamily. Classic translation factor GTPase family. EF-G/EF-2 subfamily.

Its subcellular location is the cytoplasm. Catalyzes the GTP-dependent ribosomal translocation step during translation elongation. During this step, the ribosome changes from the pre-translocational (PRE) to the post-translocational (POST) state as the newly formed A-site-bound peptidyl-tRNA and P-site-bound deacylated tRNA move to the P and E sites, respectively. Catalyzes the coordinated movement of the two tRNA molecules, the mRNA and conformational changes in the ribosome. This chain is Elongation factor G 2, found in Geobacter sulfurreducens (strain ATCC 51573 / DSM 12127 / PCA).